Consider the following 174-residue polypeptide: Elongation factor Tu, mitochondrial (174 aa).

62-66 (DCPGH) lines the GTP pocket. At Lys-78 the chain carries N6-succinyllysine. Residue Thr-103 is modified to Phosphothreonine. The residue at position 121 (Ser-121) is a Phosphoserine. Position 161 is an N6-acetyllysine (Lys-161).

The protein belongs to the GTP-binding elongation factor family. EF-Tu/EF-1A subfamily.

The protein resides in the mitochondrion. It carries out the reaction GTP + H2O = GDP + phosphate + H(+). GTP hydrolase that promotes the GTP-dependent binding of aminoacyl-tRNA to the A-site of ribosomes during protein biosynthesis. In Mesocricetus auratus (Golden hamster), this protein is Elongation factor Tu, mitochondrial.